The following is a 382-amino-acid chain: UDP-4-amino-4-deoxy-L-arabinose--oxoglutarate aminotransferase (382 aa).

Residue lysine 183 is modified to N6-(pyridoxal phosphate)lysine.

The protein belongs to the DegT/DnrJ/EryC1 family. ArnB subfamily. As to quaternary structure, homodimer. Pyridoxal 5'-phosphate serves as cofactor.

It carries out the reaction UDP-4-amino-4-deoxy-beta-L-arabinose + 2-oxoglutarate = UDP-beta-L-threo-pentopyranos-4-ulose + L-glutamate. It functions in the pathway nucleotide-sugar biosynthesis; UDP-4-deoxy-4-formamido-beta-L-arabinose biosynthesis; UDP-4-deoxy-4-formamido-beta-L-arabinose from UDP-alpha-D-glucuronate: step 2/3. The protein operates within bacterial outer membrane biogenesis; lipopolysaccharide biosynthesis. Its function is as follows. Catalyzes the conversion of UDP-4-keto-arabinose (UDP-Ara4O) to UDP-4-amino-4-deoxy-L-arabinose (UDP-L-Ara4N). The modified arabinose is attached to lipid A and is required for resistance to polymyxin and cationic antimicrobial peptides. This Pseudomonas aeruginosa (strain LESB58) protein is UDP-4-amino-4-deoxy-L-arabinose--oxoglutarate aminotransferase.